The sequence spans 457 residues: Putative F-box protein At3g58860 (457 aa).

The region spanning 6–54 (MDLFSKLPDEVISHILSSLPTKEAASTSVLAKKWRYLFAFVPSLDFNDS) is the F-box domain.

The chain is Putative F-box protein At3g58860 from Arabidopsis thaliana (Mouse-ear cress).